The primary structure comprises 189 residues: Stathmin-4 (189 aa).

S-palmitoyl cysteine attachment occurs at residues Cys20 and Cys22. Positions 48-189 constitute an SLD domain; the sequence is SDMEVIELNK…NKELKEEASR (142 aa). 2 positions are modified to phosphoserine: Glu54 and Ser90. Positions 90–189 form a coiled coil; the sequence is SLEEIQKKLE…NKELKEEASR (100 aa). Positions 168 to 189 are disordered; the sequence is QEKDKHAEEVRKNKELKEEASR.

The protein belongs to the stathmin family. As to expression, nervous tissue.

The protein resides in the golgi apparatus. Its subcellular location is the cell projection. It localises to the growth cone. The protein localises to the axon. In terms of biological role, exhibits microtubule-destabilizing activity. The chain is Stathmin-4 (Stmn4) from Rattus norvegicus (Rat).